A 201-amino-acid polypeptide reads, in one-letter code: Ras-related protein Rab-9A (201 aa).

Ala2 carries the N-acetylalanine modification. Residue Gly17 coordinates GDP. GTP contacts are provided by Gly17, Val18, Gly19, Lys20, Ser21, Ser22, Thr34, His38, and Thr39. 4 residues coordinate GDP: Gly19, Lys20, Ser21, and Ser22. Residue Ser21 coordinates Mg(2+). The short motif at Lys31–Val42 is the Switch 1 element. Thr39 and Asp62 together coordinate Mg(2+). Positions Ala64–Arg78 match the Switch 2 motif. GTP-binding residues include Gly65, Asn124, Lys125, Asp127, Ala155, and Lys156. GDP is bound by residues Asn124, Lys125, Asp127, Ala155, and Lys156. Position 179 is a phosphoserine (Ser179). Position 187 is a phosphothreonine (Thr187). Residues Cys200 and Cys201 are each lipidated (S-geranylgeranyl cysteine).

It belongs to the small GTPase superfamily. Rab family. In terms of assembly, interacts (preferentially in its GTP-bound form) with GCC2 (via its GRIP domain). Interacts (GTP-bound form) with SGSM1; the GDP-bound form has much lower affinity for SGSM1. Interacts with SGSM2. The GTP-bound form but not the GDP-bound form interacts with HPS4 and BLOC-3 complex (heterodimer of HPS1 and HPS4) but does not interact with HPS1 alone. Interacts (GTP-bound form) with NDE1; two RAB9A-GTP molecules lie on the opposite sides of the NDE1 homodimer; the interaction leads to RAB9A-dynein motor tethering. Interacts (GTP-bound form) with NDEL1. It depends on Mg(2+) as a cofactor.

The protein resides in the cell membrane. Its subcellular location is the endoplasmic reticulum membrane. It is found in the golgi apparatus membrane. The protein localises to the late endosome. It localises to the cytoplasmic vesicle. The protein resides in the phagosome membrane. Its subcellular location is the phagosome. It is found in the cytoplasmic vesicle membrane. The protein localises to the melanosome. The catalysed reaction is GTP + H2O = GDP + phosphate + H(+). With respect to regulation, regulated by guanine nucleotide exchange factors (GEFs) which promote the exchange of bound GDP for free GTP. Regulated by GTPase activating proteins (GAPs) which increase the GTP hydrolysis activity. Inhibited by GDP dissociation inhibitors (GDIs). Its function is as follows. The small GTPases Rab are key regulators of intracellular membrane trafficking, from the formation of transport vesicles to their fusion with membranes. Rabs cycle between an inactive GDP-bound form and an active GTP-bound form that is able to recruit to membranes different sets of downstream effectors directly responsible for vesicle formation, movement, tethering and fusion. RAB9A is involved in the transport of proteins between the endosomes and the trans-Golgi network (TGN). Specifically uses NDE1/NDEL1 as an effector to interact with the dynein motor complex in order to control retrograde trafficking of RAB9-associated late endosomes to the TGN. Involved in the recruitment of SGSM2 to melanosomes and is required for the proper trafficking of melanogenic enzymes TYR, TYRP1 and DCT/TYRP2 to melanosomes in melanocytes. This is Ras-related protein Rab-9A from Homo sapiens (Human).